The following is a 941-amino-acid chain: Isoleucine--tRNA ligase (941 aa).

The 'HIGH' region motif lies at Pro59–His69. Glu562 is a binding site for L-isoleucyl-5'-AMP. The 'KMSKS' region signature appears at Lys603 to Ser607. Lys606 is a binding site for ATP. Positions 904, 907, 924, and 927 each coordinate Zn(2+).

Belongs to the class-I aminoacyl-tRNA synthetase family. IleS type 1 subfamily. Monomer. Zn(2+) is required as a cofactor.

Its subcellular location is the cytoplasm. It catalyses the reaction tRNA(Ile) + L-isoleucine + ATP = L-isoleucyl-tRNA(Ile) + AMP + diphosphate. Catalyzes the attachment of isoleucine to tRNA(Ile). As IleRS can inadvertently accommodate and process structurally similar amino acids such as valine, to avoid such errors it has two additional distinct tRNA(Ile)-dependent editing activities. One activity is designated as 'pretransfer' editing and involves the hydrolysis of activated Val-AMP. The other activity is designated 'posttransfer' editing and involves deacylation of mischarged Val-tRNA(Ile). The chain is Isoleucine--tRNA ligase from Haemophilus influenzae (strain PittEE).